We begin with the raw amino-acid sequence, 132 residues long: Dormancy-associated protein 1 (132 aa).

Residues 53–76 (MPAAVSPGTPTTPTTPTTPRKDNV) form a disordered region. Low complexity predominate over residues 61–70 (TPTTPTTPTT). Position 64 is a phosphothreonine (Thr64).

It belongs to the DRM1/ARP family. In terms of tissue distribution, isoform 1: Expressed mainly in the low bolt. Isoform 2: Expressed mainly in the low bolt. Detected in flowers. Isoform 4: Expressed mainly in the low bolt. Isoform 5: Expressed mainly in the 6 days old seedlings. Detected in 16 days old seedlings, axil, low bolt and floral samples, but only barely in leaves and top bolt.

The sequence is that of Dormancy-associated protein 1 from Arabidopsis thaliana (Mouse-ear cress).